The following is a 473-amino-acid chain: ATP synthase subunit beta (473 aa).

153–160 lines the ATP pocket; it reads GGAGVGKT.

This sequence belongs to the ATPase alpha/beta chains family. F-type ATPases have 2 components, CF(1) - the catalytic core - and CF(0) - the membrane proton channel. CF(1) has five subunits: alpha(3), beta(3), gamma(1), delta(1), epsilon(1). CF(0) has three main subunits: a(1), b(2) and c(9-12). The alpha and beta chains form an alternating ring which encloses part of the gamma chain. CF(1) is attached to CF(0) by a central stalk formed by the gamma and epsilon chains, while a peripheral stalk is formed by the delta and b chains.

The protein localises to the cell inner membrane. It catalyses the reaction ATP + H2O + 4 H(+)(in) = ADP + phosphate + 5 H(+)(out). In terms of biological role, produces ATP from ADP in the presence of a proton gradient across the membrane. The catalytic sites are hosted primarily by the beta subunits. The polypeptide is ATP synthase subunit beta (Rickettsia bellii (strain RML369-C)).